Consider the following 225-residue polypeptide: Insulin-induced gene 2 protein (225 aa).

Residues 1–28 (MAEGETKSPGPKKCGPYISSVTSQSVNL) lie on the Cytoplasmic side of the membrane. The chain crosses the membrane as a helical span at residues 29–51 (MIRGVVLFFIGVFLALVLNLLQI). Residues 52-70 (QRNVTLFPPDVIASIFSSA) lie on the Lumenal side of the membrane. The helical transmembrane segment at 71-88 (WWVPPCCGTASAVIGLLY) threads the bilayer. The Cytoplasmic segment spans residues 89–103 (PCIDRHLGEPHKFKR). Residues 104–126 (EWSSVMRCVAVFVGINHASAKVD) form a helical membrane-spanning segment. Over 127-129 (FDN) the chain is Lumenal. The helical transmembrane segment at 130-148 (NIQLSLTLAALSIGLWWTF) threads the bilayer. Over 149–153 (DRSRS) the chain is Cytoplasmic. Phosphoserine is present on Ser151. Residues 154-175 (GFGLGVGIAFLATLVTQLLVYN) form a helical membrane-spanning segment. Over 176-189 (GVYQYTSPDFLYVR) the chain is Lumenal. The helical transmembrane segment at 190 to 207 (SWLPCIFFAGGITMGNIG) threads the bilayer. At 208–225 (RQLAMYECKVIAEKSHQE) the chain is on the cytoplasmic side. Cys215 carries the cysteine sulfenic acid (-SOH); alternate modification. A Glycyl cysteine thioester (Cys-Gly) (interchain with G-Cter in ubiquitin); alternate cross-link involves residue Cys215. A KxHxx motif is present at residues 219–225 (AEKSHQE).

The protein belongs to the INSIG family. Interacts with SCAP; interaction is direct and only takes place in the presence of sterols; it prevents interaction between SCAP and the coat protein complex II (COPII). Associates with the SCAP-SREBP complex (composed of SCAP and SREBF1/SREBP1 or SREBF2/SREBP2); association is mediated via its interaction with SCAP and only takes place in the presence of sterols. Interacts with RNF139. Interacts with RNF145. In terms of processing, phosphorylation at Ser-151 by PCK1 reduces binding to oxysterol, disrupting the interaction between INSIG2 and SCAP, thereby promoting nuclear translocation of SREBP proteins (SREBF1/SREBP1 or SREBF2/SREBP2) and subsequent transcription of downstream lipogenesis-related genes. Polyubiquitinated by AMFR/gp78 at Cys-215 in some tissues such as adipose tissues, undifferentiated myoblasts and liver, leading to its degradation. In differentiated myotubes, Cys-215 oxidation prevents ubiquitination at the same site, resulting in protein stabilization. Post-translationally, oxidized at Cys-215 in differentiated myotubes, preventing ubiquitination at the same site, and resulting in protein stabilization.

The protein resides in the endoplasmic reticulum membrane. In terms of biological role, oxysterol-binding protein that mediates feedback control of cholesterol synthesis by controlling both endoplasmic reticulum to Golgi transport of SCAP and degradation of HMGCR. Acts as a negative regulator of cholesterol biosynthesis by mediating the retention of the SCAP-SREBP complex in the endoplasmic reticulum, thereby blocking the processing of sterol regulatory element-binding proteins (SREBPs) SREBF1/SREBP1 and SREBF2/SREBP2. Binds oxysterol, including 22-hydroxycholesterol, 24-hydroxycholesterol, 25-hydroxycholesterol and 27-hydroxycholesterol, regulating interaction with SCAP and retention of the SCAP-SREBP complex in the endoplasmic reticulum. In presence of oxysterol, interacts with SCAP, retaining the SCAP-SREBP complex in the endoplasmic reticulum, thereby preventing SCAP from escorting SREBF1/SREBP1 and SREBF2/SREBP2 to the Golgi. Sterol deprivation or phosphorylation by PCK1 reduce oxysterol-binding, disrupting the interaction between INSIG2 and SCAP, thereby promoting Golgi transport of the SCAP-SREBP complex, followed by processing and nuclear translocation of SREBF1/SREBP1 and SREBF2/SREBP2. Also regulates cholesterol synthesis by regulating degradation of HMGCR: initiates the sterol-mediated ubiquitin-mediated endoplasmic reticulum-associated degradation (ERAD) of HMGCR via recruitment of the reductase to the ubiquitin ligase RNF139. In Sus scrofa (Pig), this protein is Insulin-induced gene 2 protein.